Reading from the N-terminus, the 82-residue chain is Protein ImpC (82 aa).

This sequence belongs to the DinI family.

The imp operon is involved in UV protection and mutation, however the ImpC protein is not essential for these functions. This Salmonella typhimurium protein is Protein ImpC (impC).